The chain runs to 227 residues: MKFAVIVFPGSNCDVDMFHAIKDELGEEVDYVWHDTENLDEYDAILLPGGFSYGDYLRCGAISRFANAMKAVQKAAEQGKPILGVCNGFQILVESGLLPGALMRNENLKFMCRTVQLRVENNETMFTSQYEKDEIINIPIAHGEGNYYCDEETLKQLEENNQIAFRYVENPNGSVSDIAGIVNEKGNVLGMMPHPERAVDELLGGAEGLKVFQSILKQWRETYVVNA.

The 223-residue stretch at Phe-3–Val-225 folds into the Glutamine amidotransferase type-1 domain. Residue Cys-86 is the Nucleophile of the active site. Residues His-194 and Glu-196 contribute to the active site.

As to quaternary structure, part of the FGAM synthase complex composed of 1 PurL, 1 PurQ and 2 PurS subunits.

Its subcellular location is the cytoplasm. It carries out the reaction N(2)-formyl-N(1)-(5-phospho-beta-D-ribosyl)glycinamide + L-glutamine + ATP + H2O = 2-formamido-N(1)-(5-O-phospho-beta-D-ribosyl)acetamidine + L-glutamate + ADP + phosphate + H(+). It catalyses the reaction L-glutamine + H2O = L-glutamate + NH4(+). It functions in the pathway purine metabolism; IMP biosynthesis via de novo pathway; 5-amino-1-(5-phospho-D-ribosyl)imidazole from N(2)-formyl-N(1)-(5-phospho-D-ribosyl)glycinamide: step 1/2. Functionally, part of the phosphoribosylformylglycinamidine synthase complex involved in the purines biosynthetic pathway. Catalyzes the ATP-dependent conversion of formylglycinamide ribonucleotide (FGAR) and glutamine to yield formylglycinamidine ribonucleotide (FGAM) and glutamate. The FGAM synthase complex is composed of three subunits. PurQ produces an ammonia molecule by converting glutamine to glutamate. PurL transfers the ammonia molecule to FGAR to form FGAM in an ATP-dependent manner. PurS interacts with PurQ and PurL and is thought to assist in the transfer of the ammonia molecule from PurQ to PurL. The chain is Phosphoribosylformylglycinamidine synthase subunit PurQ from Bacillus thuringiensis (strain Al Hakam).